Reading from the N-terminus, the 932-residue chain is Protocadherin gamma-A8 (932 aa).

Residues 1 to 29 (MAAPQSRPRRGELILLCALLGTLWEIGRG) form the signal peptide. Cadherin domains are found at residues 30 to 133 (QIRY…NPKF), 134 to 242 (QVED…APVF), 243 to 347 (PHPI…RPEV), 348 to 452 (IITS…PPTF), 453 to 562 (PHAS…APEI), and 570 to 682 (DGST…KPSV). Residues 30–692 (QIRYSVPEET…DPNDSSLTLY (663 aa)) are Extracellular-facing. N47 carries an N-linked (GlcNAc...) asparagine glycan. Residues N414, N419, and N545 are each glycosylated (N-linked (GlcNAc...) asparagine). N685 is a glycosylation site (N-linked (GlcNAc...) asparagine). The helical transmembrane segment at 693–713 (LVVAVAAISCVFLAFVAVLLG) threads the bilayer. Residues 714-932 (LRLRRWHKSH…KKKSGKKEKK (219 aa)) lie on the Cytoplasmic side of the membrane. Disordered regions lie at residues 804–841 (ADHG…WPNN) and 902–932 (ATLT…KEKK). Positions 810 to 841 (APPNTDWRFSQAQRPGTSGSQNGDDTGTWPNN) are enriched in polar residues. Residues 922 to 932 (NKKKSGKKEKK) show a composition bias toward basic residues.

The protein localises to the cell membrane. In terms of biological role, potential calcium-dependent cell-adhesion protein. May be involved in the establishment and maintenance of specific neuronal connections in the brain. In Pan troglodytes (Chimpanzee), this protein is Protocadherin gamma-A8 (PCDHGA8).